The following is a 339-amino-acid chain: Phenylalanine--tRNA ligase alpha subunit (339 aa).

Glu254 serves as a coordination point for Mg(2+).

Belongs to the class-II aminoacyl-tRNA synthetase family. Phe-tRNA synthetase alpha subunit type 1 subfamily. In terms of assembly, tetramer of two alpha and two beta subunits. Mg(2+) is required as a cofactor.

The protein resides in the cytoplasm. It catalyses the reaction tRNA(Phe) + L-phenylalanine + ATP = L-phenylalanyl-tRNA(Phe) + AMP + diphosphate + H(+). The chain is Phenylalanine--tRNA ligase alpha subunit from Clostridium beijerinckii (strain ATCC 51743 / NCIMB 8052) (Clostridium acetobutylicum).